The sequence spans 196 residues: MKIVTVEFVKSATLPSGYPPGSLPEVAFVGRSNVGKSSLINTLLRRKQLARTSNTPGRTQLINFFNVNQELLFVDLPGYGFARVPEAVKREWGPMIETYLRDRECLRMVVFILDIRRDPSQEDLALKGWLDYYGRRTLFVLTKSDKLSRGESKRRQRSVQESLALPEMPLIFSAKTGLGRERILEEIRKAKGEARS.

One can recognise an EngB-type G domain in the interval 22-193; that stretch reads SLPEVAFVGR…LEEIRKAKGE (172 aa). GTP-binding positions include 30–37, 57–61, 75–78, 142–145, and 172–174; these read GRSNVGKS, GRTQL, DLPG, TKSD, and FSA. Residues S37 and T59 each coordinate Mg(2+).

The protein belongs to the TRAFAC class TrmE-Era-EngA-EngB-Septin-like GTPase superfamily. EngB GTPase family. The cofactor is Mg(2+).

Functionally, necessary for normal cell division and for the maintenance of normal septation. The sequence is that of Probable GTP-binding protein EngB from Syntrophus aciditrophicus (strain SB).